A 104-amino-acid chain; its full sequence is L-rhamnose mutarotase (104 aa).

Residue Tyr18 coordinates substrate. The Proton donor role is filled by His22. Substrate-binding positions include Tyr41 and 76 to 77 (WW). A disordered region spans residues 85–104 (PSNPDNSPISDALDPVFYLD).

It belongs to the rhamnose mutarotase family. Homodimer.

The protein localises to the cytoplasm. It catalyses the reaction alpha-L-rhamnose = beta-L-rhamnose. It participates in carbohydrate metabolism; L-rhamnose metabolism. Its function is as follows. Involved in the anomeric conversion of L-rhamnose. The sequence is that of L-rhamnose mutarotase from Pectobacterium atrosepticum (strain SCRI 1043 / ATCC BAA-672) (Erwinia carotovora subsp. atroseptica).